A 351-amino-acid polypeptide reads, in one-letter code: Thiamine-phosphate synthase (351 aa).

The tract at residues 1 to 127 (MQNLAPASEG…SETAKALRYR (127 aa)) is unknown. The tract at residues 64 to 84 (RAARQTDQDPGTALSHPQERD) is disordered. The thiamine-phosphate synthase stretch occupies residues 128–351 (VYILEQALTL…LRRLSQGEPS (224 aa)). 4-amino-2-methyl-5-(diphosphooxymethyl)pyrimidine-binding positions include 178-182 (QYRDK) and Asn210. Mg(2+)-binding residues include Asp211 and Asp230. Ser249 is a binding site for 4-amino-2-methyl-5-(diphosphooxymethyl)pyrimidine. 275-277 (TPT) is a binding site for 2-[(2R,5Z)-2-carboxy-4-methylthiazol-5(2H)-ylidene]ethyl phosphate. Lys278 contacts 4-amino-2-methyl-5-(diphosphooxymethyl)pyrimidine. Gly305 contributes to the 2-[(2R,5Z)-2-carboxy-4-methylthiazol-5(2H)-ylidene]ethyl phosphate binding site.

It belongs to the thiamine-phosphate synthase family. Mg(2+) is required as a cofactor.

The enzyme catalyses 2-[(2R,5Z)-2-carboxy-4-methylthiazol-5(2H)-ylidene]ethyl phosphate + 4-amino-2-methyl-5-(diphosphooxymethyl)pyrimidine + 2 H(+) = thiamine phosphate + CO2 + diphosphate. It catalyses the reaction 2-(2-carboxy-4-methylthiazol-5-yl)ethyl phosphate + 4-amino-2-methyl-5-(diphosphooxymethyl)pyrimidine + 2 H(+) = thiamine phosphate + CO2 + diphosphate. The catalysed reaction is 4-methyl-5-(2-phosphooxyethyl)-thiazole + 4-amino-2-methyl-5-(diphosphooxymethyl)pyrimidine + H(+) = thiamine phosphate + diphosphate. The protein operates within cofactor biosynthesis; thiamine diphosphate biosynthesis; thiamine phosphate from 4-amino-2-methyl-5-diphosphomethylpyrimidine and 4-methyl-5-(2-phosphoethyl)-thiazole: step 1/1. Its function is as follows. Condenses 4-methyl-5-(beta-hydroxyethyl)thiazole monophosphate (THZ-P) and 2-methyl-4-amino-5-hydroxymethyl pyrimidine pyrophosphate (HMP-PP) to form thiamine monophosphate (TMP). The sequence is that of Thiamine-phosphate synthase from Thermosynechococcus vestitus (strain NIES-2133 / IAM M-273 / BP-1).